Consider the following 66-residue polypeptide: uncharacterized protein (66 aa).

It to E.coli YfhJ.

This is an uncharacterized protein from Pseudomonas aeruginosa (strain ATCC 15692 / DSM 22644 / CIP 104116 / JCM 14847 / LMG 12228 / 1C / PRS 101 / PAO1).